The chain runs to 59 residues: Large ribosomal subunit protein bL32 (59 aa).

Residues Met1–Met15 are compositionally biased toward basic residues. The tract at residues Met1–Ser21 is disordered.

Belongs to the bacterial ribosomal protein bL32 family.

The protein is Large ribosomal subunit protein bL32 of Alkaliphilus metalliredigens (strain QYMF).